The sequence spans 219 residues: 3,4-dihydroxy-2-butanone 4-phosphate synthase (219 aa).

D-ribulose 5-phosphate contacts are provided by residues 37-38 (RE), D42, 150-154 (RRGHT), and E174. A Mg(2+)-binding site is contributed by E38. H153 contacts Mg(2+).

It belongs to the DHBP synthase family. In terms of assembly, homodimer. It depends on Mg(2+) as a cofactor. Requires Mn(2+) as cofactor.

The catalysed reaction is D-ribulose 5-phosphate = (2S)-2-hydroxy-3-oxobutyl phosphate + formate + H(+). It functions in the pathway cofactor biosynthesis; riboflavin biosynthesis; 2-hydroxy-3-oxobutyl phosphate from D-ribulose 5-phosphate: step 1/1. Functionally, catalyzes the conversion of D-ribulose 5-phosphate to formate and 3,4-dihydroxy-2-butanone 4-phosphate. This chain is 3,4-dihydroxy-2-butanone 4-phosphate synthase, found in Oleidesulfovibrio alaskensis (strain ATCC BAA-1058 / DSM 17464 / G20) (Desulfovibrio alaskensis).